The sequence spans 341 residues: Dihydroorotate dehydrogenase (quinone) (341 aa).

FMN is bound by residues 62–66 (AGMDK) and Thr86. Substrate is bound at residue Lys66. Residue 111–115 (NRMGF) coordinates substrate. 2 residues coordinate FMN: Asn139 and Asn172. A substrate-binding site is contributed by Asn172. The active-site Nucleophile is the Ser175. Asn177 provides a ligand contact to substrate. Residues Lys217 and Thr245 each contribute to the FMN site. 246–247 (NT) provides a ligand contact to substrate. FMN contacts are provided by residues Gly268, Gly297, and 318 to 319 (YS).

It belongs to the dihydroorotate dehydrogenase family. Type 2 subfamily. In terms of assembly, monomer. FMN is required as a cofactor.

The protein localises to the cell membrane. It carries out the reaction (S)-dihydroorotate + a quinone = orotate + a quinol. The protein operates within pyrimidine metabolism; UMP biosynthesis via de novo pathway; orotate from (S)-dihydroorotate (quinone route): step 1/1. Catalyzes the conversion of dihydroorotate to orotate with quinone as electron acceptor. This Shewanella loihica (strain ATCC BAA-1088 / PV-4) protein is Dihydroorotate dehydrogenase (quinone).